A 327-amino-acid polypeptide reads, in one-letter code: Phenylalanine--tRNA ligase alpha subunit (327 aa).

Glutamate 252 lines the Mg(2+) pocket.

The protein belongs to the class-II aminoacyl-tRNA synthetase family. Phe-tRNA synthetase alpha subunit type 1 subfamily. As to quaternary structure, tetramer of two alpha and two beta subunits. It depends on Mg(2+) as a cofactor.

The protein localises to the cytoplasm. The enzyme catalyses tRNA(Phe) + L-phenylalanine + ATP = L-phenylalanyl-tRNA(Phe) + AMP + diphosphate + H(+). This is Phenylalanine--tRNA ligase alpha subunit from Yersinia pestis bv. Antiqua (strain Angola).